Reading from the N-terminus, the 135-residue chain is MAREFSRLDRVAEQIQKELAQLIQRELKDPRLGMVTVNSVKVSKDLSYADVYVTVLNLKDVEDDGDASKASLKVLESAAGFLRSELGRAIKLRVMPQLRFHYDASVSNAQRLGALIQKARAKDSSASDSSDDSHN.

The protein belongs to the RbfA family. Monomer. Binds 30S ribosomal subunits, but not 50S ribosomal subunits or 70S ribosomes.

Its subcellular location is the cytoplasm. Its function is as follows. One of several proteins that assist in the late maturation steps of the functional core of the 30S ribosomal subunit. Associates with free 30S ribosomal subunits (but not with 30S subunits that are part of 70S ribosomes or polysomes). Required for efficient processing of 16S rRNA. May interact with the 5'-terminal helix region of 16S rRNA. This is Ribosome-binding factor A from Hahella chejuensis (strain KCTC 2396).